A 183-amino-acid chain; its full sequence is Negative modulator of initiation of replication (183 aa).

The disordered stretch occupies residues 43-70; sequence VNDTQPVSAPAPSKAAPSAGNESRPQDR. Positions 50–61 are enriched in low complexity; that stretch reads SAPAPSKAAPSA. 3 interaction with DNA regions span residues 89–90, 118–122, and 152–158; these read AV, RTRIY, and NTNTGRK.

It belongs to the SeqA family. In terms of assembly, homodimer. Polymerizes to form helical filaments.

Its subcellular location is the cytoplasm. Functionally, negative regulator of replication initiation, which contributes to regulation of DNA replication and ensures that replication initiation occurs exactly once per chromosome per cell cycle. Binds to pairs of hemimethylated GATC sequences in the oriC region, thus preventing assembly of replication proteins and re-initiation at newly replicated origins. Repression is relieved when the region becomes fully methylated. The chain is Negative modulator of initiation of replication from Pantoea ananatis (strain AJ13355).